The primary structure comprises 131 residues: Metalloproteinase inhibitor (131 aa).

The first 29 residues, 1-29 (MVRKRALGLAGSALTLVLGAVGFTAPAQA), serve as a signal peptide directing secretion. 2 disulfides stabilise this stretch: C33–C39 and C93–C98.

Its function is as follows. Inhibits microbial metallo-proteinases, such as thermolysin, but not serine, thiol, or carboxyl proteinases. This Streptomyces nigrescens protein is Metalloproteinase inhibitor (smpI).